Here is a 492-residue protein sequence, read N- to C-terminus: 3-octaprenyl-4-hydroxybenzoate carboxy-lyase (492 aa).

Asn175 provides a ligand contact to Mn(2+). Residues 178–180 (IYR), 192–194 (RWL), and 197–198 (RG) contribute to the prenylated FMN site. Residue Glu241 coordinates Mn(2+). Residue Asp290 is the Proton donor of the active site.

The protein belongs to the UbiD family. Homohexamer. Requires prenylated FMN as cofactor. Mn(2+) serves as cofactor.

It localises to the cell membrane. It catalyses the reaction a 4-hydroxy-3-(all-trans-polyprenyl)benzoate + H(+) = a 2-(all-trans-polyprenyl)phenol + CO2. It functions in the pathway cofactor biosynthesis; ubiquinone biosynthesis. Catalyzes the decarboxylation of 3-octaprenyl-4-hydroxy benzoate to 2-octaprenylphenol, an intermediate step in ubiquinone biosynthesis. This chain is 3-octaprenyl-4-hydroxybenzoate carboxy-lyase, found in Salmonella paratyphi A (strain ATCC 9150 / SARB42).